We begin with the raw amino-acid sequence, 1097 residues long: DNA-directed RNA polymerase subunit beta (1097 aa).

The interval 1071 to 1097 (MQDVNPKRNTPSRPTYESLGTSEYAED) is disordered. Polar residues predominate over residues 1077-1091 (KRNTPSRPTYESLGT).

This sequence belongs to the RNA polymerase beta chain family. As to quaternary structure, in cyanobacteria the RNAP catalytic core is composed of 2 alpha, 1 beta, 1 beta', 1 gamma and 1 omega subunit. When a sigma factor is associated with the core the holoenzyme is formed, which can initiate transcription.

It catalyses the reaction RNA(n) + a ribonucleoside 5'-triphosphate = RNA(n+1) + diphosphate. DNA-dependent RNA polymerase catalyzes the transcription of DNA into RNA using the four ribonucleoside triphosphates as substrates. This is DNA-directed RNA polymerase subunit beta from Prochlorococcus marinus subsp. pastoris (strain CCMP1986 / NIES-2087 / MED4).